The chain runs to 691 residues: Elongation factor G (691 aa).

A tr-type G domain is found at 8-282 (ERVRNIGIAA…AVVNYLPAPV (275 aa)). GTP-binding positions include 17 to 24 (AHIDAGKT), 81 to 85 (DTPGH), and 135 to 138 (NKMD).

This sequence belongs to the TRAFAC class translation factor GTPase superfamily. Classic translation factor GTPase family. EF-G/EF-2 subfamily.

Its subcellular location is the cytoplasm. Functionally, catalyzes the GTP-dependent ribosomal translocation step during translation elongation. During this step, the ribosome changes from the pre-translocational (PRE) to the post-translocational (POST) state as the newly formed A-site-bound peptidyl-tRNA and P-site-bound deacylated tRNA move to the P and E sites, respectively. Catalyzes the coordinated movement of the two tRNA molecules, the mRNA and conformational changes in the ribosome. The protein is Elongation factor G of Prochlorococcus marinus (strain NATL2A).